Consider the following 860-residue polypeptide: Probable linoleate 9S-lipoxygenase 4 (860 aa).

A PLAT domain is found at 29–159 (NALDFTDLAG…RYKSDRIFFA (131 aa)). The region spanning 162–860 (PYLPSETPEL…GKGIPNSVSI (699 aa)) is the Lipoxygenase domain. Residues 209–246 (PDQGKENVRTTLGGSADYPYPRRGRTGRPPTRTDPKSE) are disordered. His521, His526, His712, Asn716, and Ile860 together coordinate Fe cation.

The protein belongs to the lipoxygenase family. Monomer. Fe cation serves as cofactor. Expressed in tubers and roots. Not detected in leaves, flowers, stems, shoot tips, or axillary buds.

It is found in the cytoplasm. It catalyses the reaction (9Z,12Z)-octadecadienoate + O2 = (9S)-hydroperoxy-(10E,12Z)-octadecadienoate. Its pathway is lipid metabolism; oxylipin biosynthesis. Plant lipoxygenases may be involved in a number of diverse aspects of plant physiology including growth and development, pest resistance, and senescence or responses to wounding. Catalyzes the hydroperoxidation of lipids containing a cis,cis-1,4-pentadiene structure. The polypeptide is Probable linoleate 9S-lipoxygenase 4 (LOX1.4) (Solanum tuberosum (Potato)).